The sequence spans 302 residues: Phosphatidylglycerol--prolipoprotein diacylglyceryl transferase (302 aa).

A run of 3 helical transmembrane segments spans residues 26–46 (WYALAYVVGILLGWRYAVMLV), 67–87 (LVLWITLGIILGGRIGYVLFY), and 108–128 (IWEGGMSFHGGFLGVCAAIVL). Arg-156 lines the a 1,2-diacyl-sn-glycero-3-phospho-(1'-sn-glycerol) pocket. Helical transmembrane passes span 231-251 (GALVATFLICYGLFRVSLEGV) and 263-283 (LGLTMGMILSIPMLAVGVWLL).

The protein belongs to the Lgt family.

It localises to the cell inner membrane. It catalyses the reaction L-cysteinyl-[prolipoprotein] + a 1,2-diacyl-sn-glycero-3-phospho-(1'-sn-glycerol) = an S-1,2-diacyl-sn-glyceryl-L-cysteinyl-[prolipoprotein] + sn-glycerol 1-phosphate + H(+). The protein operates within protein modification; lipoprotein biosynthesis (diacylglyceryl transfer). Its function is as follows. Catalyzes the transfer of the diacylglyceryl group from phosphatidylglycerol to the sulfhydryl group of the N-terminal cysteine of a prolipoprotein, the first step in the formation of mature lipoproteins. The chain is Phosphatidylglycerol--prolipoprotein diacylglyceryl transferase from Caulobacter sp. (strain K31).